Consider the following 203-residue polypeptide: Cardiotrophin-1 (203 aa).

It belongs to the IL-6 superfamily. As to expression, expressed in the ventricle and atrium of adult rats. Also detected in the lung, kidney, liver, skeletal muscle, stomach and urinary bladder. Not detected in brain, colon, testis, spleen or thymus. Overexpressed in the ventricles in the case of hypertension and hypertrophy.

The protein resides in the secreted. Functionally, induces cardiac myocyte hypertrophy in vitro. Binds to and activates the ILST/gp130 receptor. The protein is Cardiotrophin-1 (Ctf1) of Rattus norvegicus (Rat).